The primary structure comprises 127 residues: Large ribosomal subunit protein mL55 (127 aa).

Residues 1 to 32 (MPLAILLSLLRHCGVRAALPTPRHLHTSPWRA) constitute a mitochondrion transit peptide. Ser84 is modified (phosphoserine).

Belongs to the mitochondrion-specific ribosomal protein mL55 family. In terms of assembly, component of the mitochondrial ribosome large subunit (39S) which comprises a 16S rRNA and about 50 distinct proteins.

The protein localises to the mitochondrion. This chain is Large ribosomal subunit protein mL55 (Mrpl55), found in Mus musculus (Mouse).